The primary structure comprises 431 residues: Probable 3-hydroxy-3-methylglutaryl-coenzyme A reductase (431 aa).

Residues Glu-85 and Asp-278 each act as charge relay system in the active site. His-375 functions as the Proton donor in the catalytic mechanism.

This sequence belongs to the HMG-CoA reductase family.

The catalysed reaction is (R)-mevalonate + 2 NAD(+) + CoA = (3S)-3-hydroxy-3-methylglutaryl-CoA + 2 NADH + 2 H(+). The protein operates within metabolic intermediate metabolism; (R)-mevalonate degradation; (S)-3-hydroxy-3-methylglutaryl-CoA from (R)-mevalonate: step 1/1. In terms of biological role, converts HMG-CoA to mevalonate. This is Probable 3-hydroxy-3-methylglutaryl-coenzyme A reductase from Borreliella burgdorferi (strain ATCC 35210 / DSM 4680 / CIP 102532 / B31) (Borrelia burgdorferi).